We begin with the raw amino-acid sequence, 1319 residues long: Chitin-binding domain protein cbd-1 (1319 aa).

The first 19 residues, Met1–Ser19, serve as a signal peptide directing secretion. Chitin-binding type-2 domains lie at Ala28 to Val83, Glu96 to Cys141, and Asp190 to Asp236. Disulfide bonds link Cys61/Cys72, Cys128/Cys141, and Cys222/Cys235. The disordered stretch occupies residues Tyr250 to Ala271. Positions Pro304 to Pro357 constitute a Chitin-binding type-2 4 domain. N-linked (GlcNAc...) asparagine glycosylation occurs at Asn327. Cys335 and Cys348 are joined by a disulfide. Positions Lys504–Glu524 are disordered. Residues Gly513–Glu524 are compositionally biased toward basic and acidic residues. The region spanning Asn566–Cys614 is the Chitin-binding type-2 5 domain. Residues Cys601 and Cys614 are joined by a disulfide bond. Residues Val649 to Ser682 form a disordered region. 3 consecutive Chitin-binding type-2 domains span residues Gly689–Ser745, Gly782–Thr838, and Val883–Glu942. Cys721 and Cys734 are disulfide-bonded. The tract at residues Glu742 to Asn764 is disordered. Residues Ser745 to Asn764 are compositionally biased toward polar residues. 2 cysteine pairs are disulfide-bonded: Cys814–Cys827 and Cys916–Cys929. Residues Thr984–Gly995 show a composition bias toward polar residues. The disordered stretch occupies residues Thr984 to Lys1031. N-linked (GlcNAc...) asparagine glycosylation occurs at Asn1016. The segment covering Asp1017 to Glu1027 has biased composition (acidic residues). 4 consecutive Chitin-binding type-2 domains span residues Asp1029 to Lys1081, Glu1105 to Val1163, Ser1179 to Asn1237, and Asn1242 to Gly1298. 4 disulfides stabilise this stretch: Cys1060-Cys1073, Cys1139-Cys1152, Cys1213-Cys1226, and Cys1274-Cys1287. Residues Ser1297–Tyr1312 are compositionally biased toward low complexity. The interval Ser1297 to Tyr1319 is disordered. N-linked (GlcNAc...) asparagine glycosylation occurs at Asn1304.

It is found in the secreted. The protein resides in the extracellular space. It localises to the extracellular matrix. Its function is as follows. In unfertilized oocytes, maintains egg-1 and egg-2 at the plasma membrane together with chitin synthase chs-1 and kinase mbk-2. Essential for the formation of a continuous and cohesive chitin layer following fertilization. This Caenorhabditis elegans protein is Chitin-binding domain protein cbd-1.